The following is a 615-amino-acid chain: Sodium-coupled neutral amino acid transporter 9 homolog (615 aa).

At 1-165 the chain is on the cytoplasmic side; it reads MPPFFAEFTE…LKDVSGKQGS (165 aa). Positions 41–65 are disordered; sequence VDDNDTDPLLDDEPPRRLPPAGGVP. Residues 42-52 show a composition bias toward acidic residues; sequence DDNDTDPLLDD. Residues 166–186 form a helical membrane-spanning segment; sequence IVTIFSIWNTMMGTSLLAMPW. An important for arginine binding and amino acid transport region spans residues 175 to 180; the sequence is TMMGTS. The Lumenal portion of the chain corresponds to 187 to 192; sequence ALQQAG. A helical membrane pass occupies residues 193-213; the sequence is LVLGIIIMLSMAAICFYTAYI. Over 214 to 246 the chain is Cytoplasmic; sequence VIESPKRLQDLSVDPLLAEFSDVCKSLFGRIGE. Residues 247–273 form a helical membrane-spanning segment; the sequence is YCAVVFSVCVLIGGVIVYWVLMSNFLY. Residues 274-341 lie on the Lumenal side of the membrane; that stretch reads YTGAVVYESM…TGDDSWSFDK (68 aa). Residues Asn286 and Asn295 are each glycosylated (N-linked (GlcNAc...) asparagine). Cys304 and Cys478 form a disulfide bridge. Residues 342–358 traverse the membrane as a helical segment; sequence FWTLRGTVPIYLAFALF. The Cytoplasmic segment spans residues 359–367; that stretch reads PLMNFKSPT. Residues 368–392 traverse the membrane as a helical segment; sequence FFTKFNVLGTISVMYLLMFVFSKLL. Residues 393–413 lie on the Lumenal side of the membrane; sequence ECGVNMDFSNPKSIHYVQLAN. The chain crosses the membrane as a helical span at residues 414–434; that stretch reads MHFPALSGTLTLSYFIHNAVL. Residues 435–451 are Cytoplasmic-facing; that stretch reads TILRNQKHPENNARDLS. The chain crosses the membrane as a helical span at residues 452–472; the sequence is IGYCLVAFCYVFIGFTFFAAF. Over 473–491 the chain is Lumenal; sequence PVQRSCISDNFLNNFGAGD. A helical transmembrane segment spans residues 492-512; sequence VLSSTARLFLLFQMITVLPLL. Residues 513-533 lie on the Cytoplasmic side of the membrane; the sequence is MFLVRSQLFYAIFGQTWPGAI. The helical transmembrane segment at 534-554 threads the bilayer; the sequence is RVIILNVLLIAVAVGFATFYP. Residues 555–561 are Lumenal-facing; sequence NVGSILR. The chain crosses the membrane as a helical span at residues 562–582; it reads YVGSISGLVYVFALPAMVYIK. The Cytoplasmic segment spans residues 583–594; that stretch reads QSEAAGTLTPMK. Residues 595 to 615 traverse the membrane as a helical segment; the sequence is KYAHYGIIVIGVANLIAQFVI.

It belongs to the amino acid/polyamine transporter 2 family. SLC38A9 subfamily.

The protein resides in the lysosome membrane. It is found in the late endosome membrane. With respect to regulation, amino acid transport is sodium-dependent. Transport of leucine, tyrosine and phenylalanine is increased by arginine binding. Its function is as follows. Lysosomal amino acid transporter involved in the activation of mTORC1 in response to amino acid levels. Probably acts as an amino acid sensor of the Rag GTPases and Ragulator complexes, 2 complexes involved in amino acid sensing and activation of mTORC1, a signaling complex promoting cell growth in response to growth factors, energy levels, and amino acids. This Caenorhabditis elegans protein is Sodium-coupled neutral amino acid transporter 9 homolog.